Consider the following 1147-residue polypeptide: uncharacterized protein (1147 aa).

Disordered stretches follow at residues 226–245 (FGQGQQDLDEGEAGAGGQVD), 255–297 (IQGT…QEKA), 431–617 (SQHP…QSCI), 647–670 (EEMDDHEEGGELRENHPDAQDPVR), 705–945 (HRHR…RRLQ), 1003–1032 (RQQQEEFRRKCQELQRKKQQEEAERAEAEK), and 1060–1090 (YQRRKQEAEEKTRWEAEDRRQKEKEAARLAQ). A compositionally biased stretch (basic and acidic residues) spans 268–296 (WQKDETQTEDTSKDNHHCIHTSKENHQEK). The span at 431–441 (SQHPPKGKAQR) shows a compositional bias: basic residues. The span at 538 to 549 (PAGGALPAAGQA) shows a compositional bias: low complexity. The segment covering 584-603 (LNETSPLTQKPENQGAQQSL) has biased composition (polar residues). Over residues 743–752 (NQKTSNNISN) the composition is skewed to polar residues. Positions 743-804 (NQKTSNNISN…ESKAEKKSQL (62 aa)) form a coiled coil. The segment covering 768-802 (TDKSKAPKREKEGKLHEEAEAAVGKSKESKAEKKS) has biased composition (basic and acidic residues). The segment covering 807-819 (KGKKTGAKGKRTR) has biased composition (basic residues). Positions 870-884 (SQVSIDGRSSPTQTA) are enriched in polar residues. A compositionally biased stretch (basic and acidic residues) spans 895-945 (DRSHEDPSKAFLVKREQEKASRDRLRAERAEMRRLEVERKRREQEEQRRLQ). A coiled-coil region spans residues 907–1112 (VKREQEKASR…QKDALKKHLH (206 aa)).

This is an uncharacterized protein from Bos taurus (Bovine).